A 262-amino-acid chain; its full sequence is Phosphate import ATP-binding protein PstB 2 (262 aa).

One can recognise an ABC transporter domain in the interval 18-257 (FVVRNLDLFY…PSDRRTEDYI (240 aa)). Residue 50-57 (GPSGCGKS) coordinates ATP.

This sequence belongs to the ABC transporter superfamily. Phosphate importer (TC 3.A.1.7) family. As to quaternary structure, the complex is composed of two ATP-binding proteins (PstB), two transmembrane proteins (PstC and PstA) and a solute-binding protein (PstS).

The protein localises to the cell membrane. The catalysed reaction is phosphate(out) + ATP + H2O = ADP + 2 phosphate(in) + H(+). Part of the ABC transporter complex PstSACB involved in phosphate import. Responsible for energy coupling to the transport system. In Symbiobacterium thermophilum (strain DSM 24528 / JCM 14929 / IAM 14863 / T), this protein is Phosphate import ATP-binding protein PstB 2.